Here is a 133-residue protein sequence, read N- to C-terminus: Small ribosomal subunit protein uS11 (133 aa).

The protein belongs to the universal ribosomal protein uS11 family. Part of the 30S ribosomal subunit. Interacts with proteins S7 and S18. Binds to IF-3.

Its function is as follows. Located on the platform of the 30S subunit, it bridges several disparate RNA helices of the 16S rRNA. Forms part of the Shine-Dalgarno cleft in the 70S ribosome. The sequence is that of Small ribosomal subunit protein uS11 from Cupriavidus metallidurans (strain ATCC 43123 / DSM 2839 / NBRC 102507 / CH34) (Ralstonia metallidurans).